A 141-amino-acid polypeptide reads, in one-letter code: Large ribosomal subunit protein uL11 (141 aa).

This sequence belongs to the universal ribosomal protein uL11 family. In terms of assembly, part of the ribosomal stalk of the 50S ribosomal subunit. Interacts with L10 and the large rRNA to form the base of the stalk. L10 forms an elongated spine to which L12 dimers bind in a sequential fashion forming a multimeric L10(L12)X complex. Post-translationally, one or more lysine residues are methylated.

Functionally, forms part of the ribosomal stalk which helps the ribosome interact with GTP-bound translation factors. This Shouchella clausii (strain KSM-K16) (Alkalihalobacillus clausii) protein is Large ribosomal subunit protein uL11.